The following is a 778-amino-acid chain: Serine/threonine-protein kinase BRSK1 (778 aa).

A compositionally biased stretch (gly residues) spans 1–12; that stretch reads MSSGSKEGGGGS. The disordered stretch occupies residues 1–29; that stretch reads MSSGSKEGGGGSPAYHLPHPHPHPPQHAQ. In terms of domain architecture, Protein kinase spans 34 to 285; sequence YRLEKTLGKG…LEQIQKHPWY (252 aa). ATP is bound by residues 40–48 and K63; that span reads LGKGQTGLV. Residue D156 is the Proton acceptor of the active site. Phosphothreonine; by LKB1 is present on T189. Residue S193 is modified to Phosphoserine. A UBA domain is found at 314 to 356; it reads ELDPDVLESMASLGCFRDRERLHRELRSEEENQEKMIYYLLLD. The span at 362-383 shows a compositional bias: basic and acidic residues; sequence PSCEDQDLPPRNDVDPPRKRVD. The segment at 362-548 is disordered; that stretch reads PSCEDQDLPP…SPGGGVGGAA (187 aa). Phosphoserine is present on residues S399, S443, S447, and S450. Residues 430–457 show a composition bias toward low complexity; the sequence is SRSVSGASTGLSSSPLSSPRSPVFSFSP. R466, R481, R484, and R498 each carry omega-N-methylarginine. The span at 491-508 shows a compositional bias: pro residues; it reads QPPPPSARSTPLPGPPGS. A Phosphoserine modification is found at S508. The span at 509 to 533 shows a compositional bias: low complexity; the sequence is PRSSGGTPLHSPLHTPRASPTGTPG. R525 is modified (omega-N-methylarginine). Residues T529 and T535 each carry the phosphothreonine modification. R550 bears the Omega-N-methylarginine mark. Position 583 is a phosphothreonine (T583). S586, S587, and S601 each carry phosphoserine. The disordered stretch occupies residues 719-778; sequence QPSVQALADEKNGAQTRPAGTPPRSLQPPPGRPDPDLSSSPRRGPSKDKKLLATNGTPLP.

Belongs to the protein kinase superfamily. CAMK Ser/Thr protein kinase family. SNF1 subfamily. Requires Mg(2+) as cofactor. In terms of processing, phosphorylated at Thr-189 by STK11/LKB1 in complex with STE20-related adapter-alpha (STRADA) pseudo kinase and CAB39. Not phosphorylated at Thr-189 by CaMKK2. In contrast, it is phosphorylated and activated by CaMKK1. May be inactivated via dephosphorylation of Thr-189 by PP2C. May be autophosphorylated. In terms of tissue distribution, mainly present in brain. Present in presynaptic nerve terminals (at protein level).

The protein localises to the cytoplasm. It is found in the nucleus. The protein resides in the cytoskeleton. Its subcellular location is the microtubule organizing center. It localises to the centrosome. The protein localises to the synapse. It is found in the presynaptic active zone. The protein resides in the cytoplasmic vesicle. Its subcellular location is the secretory vesicle. It localises to the synaptic vesicle. It carries out the reaction L-seryl-[protein] + ATP = O-phospho-L-seryl-[protein] + ADP + H(+). The catalysed reaction is L-threonyl-[protein] + ATP = O-phospho-L-threonyl-[protein] + ADP + H(+). It catalyses the reaction L-seryl-[tau protein] + ATP = O-phospho-L-seryl-[tau protein] + ADP + H(+). The enzyme catalyses L-threonyl-[tau protein] + ATP = O-phospho-L-threonyl-[tau protein] + ADP + H(+). With respect to regulation, activated by phosphorylation on Thr-189 by STK11/LKB1. Its function is as follows. Serine/threonine-protein kinase that plays a key role in polarization of neurons and centrosome duplication. Phosphorylates CDC25B, CDC25C, MAPT/TAU, RIMS1, TUBG1, TUBG2 and WEE1. Following phosphorylation and activation by STK11/LKB1, acts as a key regulator of polarization of cortical neurons, probably by mediating phosphorylation of microtubule-associated proteins such as MAPT/TAU at 'Thr-523' and 'Ser-573'. Also regulates neuron polarization by mediating phosphorylation of WEE1 at 'Ser-642' in postmitotic neurons, leading to down-regulate WEE1 activity in polarized neurons. Also acts as a positive regulator of centrosome duplication by mediating phosphorylation of gamma-tubulin (TUBG1 and TUBG2) at 'Ser-131', leading to translocation of gamma-tubulin and its associated proteins to the centrosome. Involved in the UV-induced DNA damage checkpoint response, probably by inhibiting CDK1 activity through phosphorylation and activation of WEE1, and inhibition of CDC25B and CDC25C. In neurons, localizes to synaptic vesicles and plays a role in neurotransmitter release, possibly by phosphorylating RIMS1. The sequence is that of Serine/threonine-protein kinase BRSK1 (Brsk1) from Rattus norvegicus (Rat).